The chain runs to 326 residues: Acetyl-coenzyme A carboxylase carboxyl transferase subunit alpha (326 aa).

The 255-residue stretch at 44 to 298 (KLETRAMQLR…KQALLDNLDE (255 aa)) folds into the CoA carboxyltransferase C-terminal domain.

This sequence belongs to the AccA family. In terms of assembly, acetyl-CoA carboxylase is a heterohexamer composed of biotin carboxyl carrier protein (AccB), biotin carboxylase (AccC) and two subunits each of ACCase subunit alpha (AccA) and ACCase subunit beta (AccD).

It is found in the cytoplasm. It carries out the reaction N(6)-carboxybiotinyl-L-lysyl-[protein] + acetyl-CoA = N(6)-biotinyl-L-lysyl-[protein] + malonyl-CoA. It functions in the pathway lipid metabolism; malonyl-CoA biosynthesis; malonyl-CoA from acetyl-CoA: step 1/1. Functionally, component of the acetyl coenzyme A carboxylase (ACC) complex. First, biotin carboxylase catalyzes the carboxylation of biotin on its carrier protein (BCCP) and then the CO(2) group is transferred by the carboxyltransferase to acetyl-CoA to form malonyl-CoA. The polypeptide is Acetyl-coenzyme A carboxylase carboxyl transferase subunit alpha (Nostoc sp. (strain PCC 7120 / SAG 25.82 / UTEX 2576)).